The following is a 271-amino-acid chain: 4-hydroxy-tetrahydrodipicolinate reductase (271 aa).

NAD(+) is bound by residues 11–16 (GGSGRM) and Glu-37. NADP(+) is bound at residue Arg-38. NAD(+) contacts are provided by residues 101–103 (GTT) and 125–128 (APNM). His-158 acts as the Proton donor/acceptor in catalysis. Residue His-159 participates in (S)-2,3,4,5-tetrahydrodipicolinate binding. The active-site Proton donor is Lys-162. 168–169 (GT) lines the (S)-2,3,4,5-tetrahydrodipicolinate pocket.

Belongs to the DapB family.

It is found in the cytoplasm. The enzyme catalyses (S)-2,3,4,5-tetrahydrodipicolinate + NAD(+) + H2O = (2S,4S)-4-hydroxy-2,3,4,5-tetrahydrodipicolinate + NADH + H(+). The catalysed reaction is (S)-2,3,4,5-tetrahydrodipicolinate + NADP(+) + H2O = (2S,4S)-4-hydroxy-2,3,4,5-tetrahydrodipicolinate + NADPH + H(+). The protein operates within amino-acid biosynthesis; L-lysine biosynthesis via DAP pathway; (S)-tetrahydrodipicolinate from L-aspartate: step 4/4. Functionally, catalyzes the conversion of 4-hydroxy-tetrahydrodipicolinate (HTPA) to tetrahydrodipicolinate. The sequence is that of 4-hydroxy-tetrahydrodipicolinate reductase from Shewanella halifaxensis (strain HAW-EB4).